A 620-amino-acid chain; its full sequence is UPF0313 protein BT_0254 (620 aa).

Residues 311 to 591 (AYDMIKFSVN…AQRQFFFWYK (281 aa)) enclose the Radical SAM core domain. [4Fe-4S] cluster-binding residues include C325, C329, and C332.

Belongs to the UPF0313 family. [4Fe-4S] cluster serves as cofactor.

The chain is UPF0313 protein BT_0254 from Bacteroides thetaiotaomicron (strain ATCC 29148 / DSM 2079 / JCM 5827 / CCUG 10774 / NCTC 10582 / VPI-5482 / E50).